Consider the following 53-residue polypeptide: Serine rich endogenous peptide 3 (53 aa).

The signal sequence occupies residues 1-26 (MTKKGPLNLRLLLLLLVVLLPSCSNC). Residues 37–53 (SSEWRRKMITVWSKSSY) carry the SCOOP motif motif. The short motif at 49–51 (SKS) is the SxS motif essential for MIK2 binding element.

The protein belongs to the serine rich endogenous peptide (SCOOP) phytocytokine family. As to quaternary structure, interacts with MIK2 (via extracellular leucine-rich repeat domain); this interaction triggers the formation of complex between MIK2 and the BAK1/SERK3 and SERK4 coreceptors, and subsequent BAK1 activation by phosphorylation.

It is found in the cell membrane. Its subcellular location is the secreted. The protein localises to the extracellular space. It localises to the apoplast. Functionally, brassicaceae-specific phytocytokine (plant endogenous peptide released into the apoplast) perceived by MIK2 in a BAK1/SERK3 and SERK4 coreceptors-dependent manner, that modulates various physiological and antimicrobial processes including growth prevention and reactive oxygen species (ROS) response regulation. In Arabidopsis thaliana (Mouse-ear cress), this protein is Serine rich endogenous peptide 3.